A 429-amino-acid chain; its full sequence is Adenylosuccinate synthetase (429 aa).

Residues 12-18 (GDEGKGK) and 40-42 (GHT) contribute to the GTP site. Residue Asp13 is the Proton acceptor of the active site. 2 residues coordinate Mg(2+): Asp13 and Gly40. IMP is bound by residues 13-16 (DEGK), 38-41 (NAGH), Thr128, Arg142, Gln223, Thr238, and Arg302. The active-site Proton donor is the His41. 298–304 (TTTGRPR) contributes to the substrate binding site. GTP is bound by residues Arg304, 330–332 (SID), and 412–414 (SVG).

It belongs to the adenylosuccinate synthetase family. In terms of assembly, homodimer. It depends on Mg(2+) as a cofactor.

The protein resides in the cytoplasm. The catalysed reaction is IMP + L-aspartate + GTP = N(6)-(1,2-dicarboxyethyl)-AMP + GDP + phosphate + 2 H(+). The protein operates within purine metabolism; AMP biosynthesis via de novo pathway; AMP from IMP: step 1/2. Plays an important role in the de novo pathway of purine nucleotide biosynthesis. Catalyzes the first committed step in the biosynthesis of AMP from IMP. In Bacillus cereus (strain ATCC 14579 / DSM 31 / CCUG 7414 / JCM 2152 / NBRC 15305 / NCIMB 9373 / NCTC 2599 / NRRL B-3711), this protein is Adenylosuccinate synthetase.